A 333-amino-acid chain; its full sequence is Low specificity L-threonine aldolase (333 aa).

Position 197 is an N6-(pyridoxal phosphate)lysine (lysine 197).

This sequence belongs to the threonine aldolase family. Homotetramer. It depends on pyridoxal 5'-phosphate as a cofactor.

It carries out the reaction L-threonine = acetaldehyde + glycine. It catalyses the reaction L-allo-threonine = acetaldehyde + glycine. Catalyzes the cleavage of L-allo-threonine and L-threonine to glycine and acetaldehyde. L-threo-phenylserine and L-erythro-phenylserine are also good substrates. This is Low specificity L-threonine aldolase (ltaE) from Escherichia coli O157:H7.